Reading from the N-terminus, the 431-residue chain is Acyl transferase 8 (431 aa).

The active-site Proton acceptor is H169. Disordered stretches follow at residues 220–247, 260–313, and 331–400; these read VADA…RAPA, HHAG…DHLR, and GLRV…PPPT. A compositionally biased stretch (low complexity) spans 224–234; it reads RGGVRPGVPRP. Over residues 264–273 the composition is skewed to gly residues; that stretch reads DGGGGGGGGR. Basic residues-rich tracts occupy residues 297–306 and 335–380; these read ERRRRRRRGR and GRPR…RRLP. Residues 381–394 are compositionally biased toward basic and acidic residues; the sequence is QRHDAPRLITERAH.

The protein belongs to the plant acyltransferase family.

Its function is as follows. Involved in the incorporation of ferulate into the cell wall. May act as arabinoxylan feruloyl transferase. The chain is Acyl transferase 8 from Oryza sativa subsp. japonica (Rice).